The following is a 122-amino-acid chain: MSFKKIIKAFVIMAALVSVQAHAGASQFFKDNCNRTTASLVEGVELTKYISDINNNTDGMYVVSSTGGVWRISRAKDYPDNVMTAEMRKIAMAAVLSGMRVNMCASPASSPNVIWAIELEAE.

The signal sequence occupies residues 1-23 (MSFKKIIKAFVIMAALVSVQAHA). Cys33 and Cys104 are joined by a disulfide.

Heterohexamer of one A chain and of five B chains.

Functionally, the biological activity of the toxin is produced by the A chain, which activates intracellular adenyl cyclase. In Escherichia coli, this protein is Heat-labile enterotoxin IIB, B chain.